Here is a 198-residue protein sequence, read N- to C-terminus: Fucoxanthin-chlorophyll a-c binding protein B, chloroplastic (198 aa).

A chloroplast-targeting transit peptide spans 1–31 (MKFTVFASLFASAAAFAPAQQAARTSVATNM). Helical transmembrane passes span 73–94 (ISML…GGDI), 114–134 (IPQA…TSVM), and 174–196 (GRAA…NILP).

It belongs to the fucoxanthin chlorophyll protein family. As to quaternary structure, the LHC complex of chromophytic algae is composed of fucoxanthin, chlorophyll A and C bound non-covalently by fucoxanthin chlorophyll proteins (FCPs). The ratio of the pigments in LHC; fucoxanthin: chlorophyll C: chlorophyll A; (0.6-1): (0.1-0.3): (1).

Its subcellular location is the plastid. The protein localises to the chloroplast thylakoid membrane. Functionally, the light-harvesting complex (LHC) functions as a light receptor, it captures and delivers excitation energy to photosystems with which it is closely associated. Energy is transferred from the carotenoid and chlorophyll C (or B) to chlorophyll A and the photosynthetic reaction centers where it is used to synthesize ATP and reducing power. The chain is Fucoxanthin-chlorophyll a-c binding protein B, chloroplastic (FCPB) from Phaeodactylum tricornutum (Diatom).